We begin with the raw amino-acid sequence, 364 residues long: MKLKTLALSLLAAGVLAGCSSHSSNMANTQMKSDKIIIAHRGASGYLPEHTLESKALAFAQHSDYLEQDLAMTKDGRLVVIHDHFLDGLTDVAKKFPYRHRKDGRYYVIDFTLKEIQSLEMTENFETKDGKQAQVYPNRFPLWKSHFRIHTFEDEIEFIQGLEKSTGKKVGIYPEIKAPWFHHQNGKDIATETLKVLKKYGYDKKTDMVYLQTFDFNELKRIKTELLPQMGMDLKLVQLIAYTDWKETQEKDPKGYWVNYNYDWMFKPGAMAEVVKYADGVGPGWYMLVNKEESKPDNIVYTPLVKELAQYNVEVHPYTVRKDALPEFFTDVNQMYDALLNKSGATGVFTDFPDTGVEFLKGIK.

The signal sequence occupies residues Met1 to Gly18. Cys19 carries the N-palmitoyl cysteine lipid modification. Residue Cys19 is the site of S-diacylglycerol cysteine attachment. Residues Lys35–Leu360 form the GP-PDE domain. Residue His40 is the Proton acceptor of the active site. Glu67 and Asp69 together coordinate Ca(2+). His82 acts as the Proton donor in catalysis. Residue Glu175 participates in Ca(2+) binding.

Belongs to the glycerophosphoryl diester phosphodiesterase family. It depends on Ca(2+) as a cofactor. Post-translationally, contains both ester- and amide-linked fatty acids.

It localises to the cell outer membrane. The catalysed reaction is a sn-glycero-3-phosphodiester + H2O = an alcohol + sn-glycerol 3-phosphate + H(+). Its function is as follows. Glycerophosphodiester phosphodiesterase hydrolyzes glycerophosphodiesters into glycerol-3-phosphate (G3P) and the corresponding alcohol. Has a specific affinity for human immunoglobulin D myeloma protein. The chain is Glycerophosphodiester phosphodiesterase (glpQ) from Haemophilus influenzae (strain ATCC 51907 / DSM 11121 / KW20 / Rd).